Here is a 564-residue protein sequence, read N- to C-terminus: Tripeptidyl-peptidase 1 (564 aa).

Positions 1–19 (MGLQACLLGLFALILSGKC) are cleaved as a signal peptide. Residues 20-195 (SYSPEPDQRR…PEPQVTGTVG (176 aa)) constitute a propeptide, removed in mature form. Cysteine 111 and cysteine 122 are disulfide-bonded. Residues 199 to 564 (GVTPSVIRKR…PALPKTLLNP (366 aa)) form the Peptidase S53 domain. 2 N-linked (GlcNAc...) asparagine glycosylation sites follow: asparagine 210 and asparagine 222. Active-site charge relay system residues include glutamate 272 and aspartate 276. Residues asparagine 286, asparagine 313, and asparagine 443 are each glycosylated (N-linked (GlcNAc...) asparagine). 2 disulfides stabilise this stretch: cysteine 365–cysteine 527 and cysteine 523–cysteine 538. The active-site Charge relay system is serine 475. Ca(2+)-binding residues include aspartate 518 and valine 519. Residues glycine 540, glycine 542, and aspartate 544 each contribute to the Ca(2+) site.

As to quaternary structure, monomer. Interacts with CLN5. Interacts with CLN3. Ca(2+) is required as a cofactor. In terms of processing, activated by autocatalytic proteolytical processing upon acidification. N-glycosylation is required for processing and activity.

The protein localises to the lysosome. It is found in the melanosome. It catalyses the reaction Release of an N-terminal tripeptide from a polypeptide, but also has endopeptidase activity.. Lysosomal serine protease with tripeptidyl-peptidase I activity. May act as a non-specific lysosomal peptidase which generates tripeptides from the breakdown products produced by lysosomal proteinases. Requires substrates with an unsubstituted N-terminus. In Pongo abelii (Sumatran orangutan), this protein is Tripeptidyl-peptidase 1 (TPP1).